We begin with the raw amino-acid sequence, 207 residues long: Glycerol-3-phosphate acyltransferase (207 aa).

6 helical membrane-spanning segments follow: residues 1–21, 42–62, 65–85, 105–125, 138–158, and 159–179; these read MIII…GKYF, ILGV…GTLA, IPII…FAII, AGVL…IFLL, ITVA…GFIL, and TDYD…IIIR.

The protein belongs to the PlsY family. As to quaternary structure, probably interacts with PlsX.

It is found in the cell membrane. The enzyme catalyses an acyl phosphate + sn-glycerol 3-phosphate = a 1-acyl-sn-glycero-3-phosphate + phosphate. The protein operates within lipid metabolism; phospholipid metabolism. Functionally, catalyzes the transfer of an acyl group from acyl-phosphate (acyl-PO(4)) to glycerol-3-phosphate (G3P) to form lysophosphatidic acid (LPA). This enzyme utilizes acyl-phosphate as fatty acyl donor, but not acyl-CoA or acyl-ACP. This is Glycerol-3-phosphate acyltransferase from Streptococcus agalactiae serotype Ia (strain ATCC 27591 / A909 / CDC SS700).